The primary structure comprises 338 residues: Ketol-acid reductoisomerase (NADP(+)) (338 aa).

The 181-residue stretch at 1-181 (MQVYYDKDAD…GGGRAGVIET (181 aa)) folds into the KARI N-terminal Rossmann domain. NADP(+) is bound by residues 24 to 27 (YGSQ), Arg-47, Ser-50, Ser-52, and 82 to 85 (DEHQ). His-107 is an active-site residue. Gly-133 is an NADP(+) binding site. A KARI C-terminal knotted domain is found at 182–327 (SFKDETETDL…AKLRDMMPWI (146 aa)). 4 residues coordinate Mg(2+): Asp-190, Glu-194, Glu-226, and Glu-230. Substrate is bound at residue Ser-251.

Belongs to the ketol-acid reductoisomerase family. It depends on Mg(2+) as a cofactor.

It catalyses the reaction (2R)-2,3-dihydroxy-3-methylbutanoate + NADP(+) = (2S)-2-acetolactate + NADPH + H(+). It carries out the reaction (2R,3R)-2,3-dihydroxy-3-methylpentanoate + NADP(+) = (S)-2-ethyl-2-hydroxy-3-oxobutanoate + NADPH + H(+). It functions in the pathway amino-acid biosynthesis; L-isoleucine biosynthesis; L-isoleucine from 2-oxobutanoate: step 2/4. The protein operates within amino-acid biosynthesis; L-valine biosynthesis; L-valine from pyruvate: step 2/4. Involved in the biosynthesis of branched-chain amino acids (BCAA). Catalyzes an alkyl-migration followed by a ketol-acid reduction of (S)-2-acetolactate (S2AL) to yield (R)-2,3-dihydroxy-isovalerate. In the isomerase reaction, S2AL is rearranged via a Mg-dependent methyl migration to produce 3-hydroxy-3-methyl-2-ketobutyrate (HMKB). In the reductase reaction, this 2-ketoacid undergoes a metal-dependent reduction by NADPH to yield (R)-2,3-dihydroxy-isovalerate. This Thioalkalivibrio sulfidiphilus (strain HL-EbGR7) protein is Ketol-acid reductoisomerase (NADP(+)).